The primary structure comprises 60 residues: Large ribosomal subunit protein uL30 (60 aa).

This sequence belongs to the universal ribosomal protein uL30 family. Part of the 50S ribosomal subunit.

The chain is Large ribosomal subunit protein uL30 from Alcanivorax borkumensis (strain ATCC 700651 / DSM 11573 / NCIMB 13689 / SK2).